The following is a 410-amino-acid chain: Cysteine desulfurase IscS (410 aa).

Pyridoxal 5'-phosphate contacts are provided by residues 80 to 81 (AT), Asn160, Gln188, and 208 to 210 (SGH). Position 211 is an N6-(pyridoxal phosphate)lysine (Lys211). Position 248 (Thr248) interacts with pyridoxal 5'-phosphate. The active-site Cysteine persulfide intermediate is the Cys334. [2Fe-2S] cluster is bound at residue Cys334.

The protein belongs to the class-V pyridoxal-phosphate-dependent aminotransferase family. NifS/IscS subfamily. As to quaternary structure, homodimer. Forms a heterotetramer with IscU, interacts with other sulfur acceptors. The cofactor is pyridoxal 5'-phosphate.

Its subcellular location is the cytoplasm. The catalysed reaction is (sulfur carrier)-H + L-cysteine = (sulfur carrier)-SH + L-alanine. It functions in the pathway cofactor biosynthesis; iron-sulfur cluster biosynthesis. Master enzyme that delivers sulfur to a number of partners involved in Fe-S cluster assembly, tRNA modification or cofactor biosynthesis. Catalyzes the removal of elemental sulfur atoms from cysteine to produce alanine. Functions as a sulfur delivery protein for Fe-S cluster synthesis onto IscU, an Fe-S scaffold assembly protein, as well as other S acceptor proteins. This chain is Cysteine desulfurase IscS, found in Rickettsia peacockii (strain Rustic).